A 199-amino-acid chain; its full sequence is Holliday junction branch migration complex subunit RuvA (199 aa).

Residues 1-63 form a domain I region; that stretch reads MYEYLTGLVT…EDNISLFGFT (63 aa). The tract at residues 64–142 is domain II; the sequence is DQNEKNLFMQ…NESSSSLFAT (79 aa). Residues 143–149 form a flexible linker region; it reads TQLTVDA. Residues 150 to 199 are domain III; it reads TVNRELKDALEALAALGYKERDIKKVQKALMKEEQMATDEYLRQALRLLN.

It belongs to the RuvA family. As to quaternary structure, homotetramer. Forms an RuvA(8)-RuvB(12)-Holliday junction (HJ) complex. HJ DNA is sandwiched between 2 RuvA tetramers; dsDNA enters through RuvA and exits via RuvB. An RuvB hexamer assembles on each DNA strand where it exits the tetramer. Each RuvB hexamer is contacted by two RuvA subunits (via domain III) on 2 adjacent RuvB subunits; this complex drives branch migration. In the full resolvosome a probable DNA-RuvA(4)-RuvB(12)-RuvC(2) complex forms which resolves the HJ.

It localises to the cytoplasm. Functionally, the RuvA-RuvB-RuvC complex processes Holliday junction (HJ) DNA during genetic recombination and DNA repair, while the RuvA-RuvB complex plays an important role in the rescue of blocked DNA replication forks via replication fork reversal (RFR). RuvA specifically binds to HJ cruciform DNA, conferring on it an open structure. The RuvB hexamer acts as an ATP-dependent pump, pulling dsDNA into and through the RuvAB complex. HJ branch migration allows RuvC to scan DNA until it finds its consensus sequence, where it cleaves and resolves the cruciform DNA. The polypeptide is Holliday junction branch migration complex subunit RuvA (Limosilactobacillus reuteri subsp. reuteri (strain JCM 1112) (Lactobacillus reuteri)).